The primary structure comprises 892 residues: Bifunctional uridylyltransferase/uridylyl-removing enzyme (892 aa).

The uridylyltransferase stretch occupies residues 1–348 (MPNFTGNTRP…LVDAKVHVRP (348 aa)). A uridylyl-removing region spans residues 349–710 (INERFQARNG…RIHNQEPGTM (362 aa)). Residues 467–589 (VDEHTLFLIH…VGDERRLNHL (123 aa)) enclose the HD domain. ACT domains are found at residues 711–786 (EVFI…LTQP) and 822–892 (VMEL…YLER).

It belongs to the GlnD family. Mg(2+) serves as cofactor.

The enzyme catalyses [protein-PII]-L-tyrosine + UTP = [protein-PII]-uridylyl-L-tyrosine + diphosphate. The catalysed reaction is [protein-PII]-uridylyl-L-tyrosine + H2O = [protein-PII]-L-tyrosine + UMP + H(+). With respect to regulation, uridylyltransferase (UTase) activity is inhibited by glutamine, while glutamine activates uridylyl-removing (UR) activity. Its function is as follows. Modifies, by uridylylation and deuridylylation, the PII regulatory proteins (GlnB and homologs), in response to the nitrogen status of the cell that GlnD senses through the glutamine level. Under low glutamine levels, catalyzes the conversion of the PII proteins and UTP to PII-UMP and PPi, while under higher glutamine levels, GlnD hydrolyzes PII-UMP to PII and UMP (deuridylylation). Thus, controls uridylylation state and activity of the PII proteins, and plays an important role in the regulation of nitrogen assimilation and metabolism. The protein is Bifunctional uridylyltransferase/uridylyl-removing enzyme of Nitrosococcus oceani (strain ATCC 19707 / BCRC 17464 / JCM 30415 / NCIMB 11848 / C-107).